The following is a 215-amino-acid chain: Oligoribonuclease (215 aa).

The Exonuclease domain occupies 5–170 (LVWIDCEMTG…ADIHESIREL (166 aa)). Residue Y127 is part of the active site. The disordered stretch occupies residues 196-215 (LSDGAGAQEETDSAEAPQSG).

The protein belongs to the oligoribonuclease family.

The protein localises to the cytoplasm. Its function is as follows. 3'-to-5' exoribonuclease specific for small oligoribonucleotides. This Mycobacterium bovis (strain BCG / Pasteur 1173P2) protein is Oligoribonuclease.